Here is a 361-residue protein sequence, read N- to C-terminus: 3-dehydroquinate synthase (361 aa).

NAD(+) is bound by residues Ser72–Lys77, Thr130–Thr131, Lys142, and Lys151. Glu184, His247, and His264 together coordinate Zn(2+).

It belongs to the sugar phosphate cyclases superfamily. Dehydroquinate synthase family. It depends on Co(2+) as a cofactor. Zn(2+) serves as cofactor. The cofactor is NAD(+).

It localises to the cytoplasm. The enzyme catalyses 7-phospho-2-dehydro-3-deoxy-D-arabino-heptonate = 3-dehydroquinate + phosphate. It participates in metabolic intermediate biosynthesis; chorismate biosynthesis; chorismate from D-erythrose 4-phosphate and phosphoenolpyruvate: step 2/7. Its function is as follows. Catalyzes the conversion of 3-deoxy-D-arabino-heptulosonate 7-phosphate (DAHP) to dehydroquinate (DHQ). In Bacillus mycoides (strain KBAB4) (Bacillus weihenstephanensis), this protein is 3-dehydroquinate synthase.